Consider the following 329-residue polypeptide: 2,3,4,5-tetrahydropyridine-2,6-dicarboxylate N-succinyltransferase (329 aa).

Positions 177 and 194 each coordinate Mg(2+). Glu210 acts as the Acyl-anhydride intermediate in catalysis. Succinyl-CoA-binding positions include Arg212, Gly227, Ser230, Ala253, 268–269 (EA), Gly276, Lys288, and 301–304 (RRNS).

It belongs to the type 2 tetrahydrodipicolinate N-succinyltransferase family. In terms of assembly, homotrimer.

The protein localises to the cytoplasm. The enzyme catalyses (S)-2,3,4,5-tetrahydrodipicolinate + succinyl-CoA + H2O = (S)-2-succinylamino-6-oxoheptanedioate + CoA. It functions in the pathway amino-acid biosynthesis; L-lysine biosynthesis via DAP pathway; LL-2,6-diaminopimelate from (S)-tetrahydrodipicolinate (succinylase route): step 1/3. Functionally, catalyzes the conversion of the cyclic tetrahydrodipicolinate (THDP) into the acyclic N-succinyl-L-2-amino-6-oxopimelate using succinyl-CoA. The polypeptide is 2,3,4,5-tetrahydropyridine-2,6-dicarboxylate N-succinyltransferase (Streptomyces coelicolor (strain ATCC BAA-471 / A3(2) / M145)).